The primary structure comprises 1252 residues: HEAT repeat-containing protein 6 (1252 aa).

The stretch at 230-269 is one HEAT 1 repeat; it reads PDLLGKSGLLMKLSDVTHSDPEVRRAAVHCMANLCLSVPG. Residues 365-417 are disordered; that stretch reads DGRSPVKPQQPESSAARPSANKKKKYKVKPKKTQQGEKAEEEEPYGEVDAAPG. The segment covering 384–396 has biased composition (basic residues); the sequence is ANKKKKYKVKPKK. Phosphoserine occurs at positions 471 and 474. HEAT repeat units lie at residues 524–562, 586–624, and 630–667; these read ELGS…GSKQ, SSIR…NAPY, and SLLT…THAP. Residue T689 is modified to Phosphothreonine. S714 is subject to Phosphoserine.

The polypeptide is HEAT repeat-containing protein 6 (Heatr6) (Rattus norvegicus (Rat)).